A 268-amino-acid chain; its full sequence is Ribosomal RNA large subunit methyltransferase E (268 aa).

S-adenosyl-L-methionine contacts are provided by Gly-50, Trp-52, Asp-68, Asp-84, and Asp-109. Catalysis depends on Lys-149, which acts as the Proton acceptor. One can recognise a TRAM domain in the interval 196–254; it reads PLRKGDKFVVDIEKLGSSGDGAVLIEGFVVFVKEVEVGEKVRIKISDVKPNFAFADVEE.

The protein belongs to the class I-like SAM-binding methyltransferase superfamily. RNA methyltransferase RlmE family.

Its subcellular location is the cytoplasm. It carries out the reaction uridine(2552) in 23S rRNA + S-adenosyl-L-methionine = 2'-O-methyluridine(2552) in 23S rRNA + S-adenosyl-L-homocysteine + H(+). Specifically methylates the uridine in position 2552 of 23S rRNA at the 2'-O position of the ribose in the fully assembled 50S ribosomal subunit. The polypeptide is Ribosomal RNA large subunit methyltransferase E (Methanosarcina mazei (strain ATCC BAA-159 / DSM 3647 / Goe1 / Go1 / JCM 11833 / OCM 88) (Methanosarcina frisia)).